Consider the following 779-residue polypeptide: Acyl-homoserine lactone acylase PvdQ (779 aa).

Positions 1-25 are cleaved as a signal peptide; it reads MIISRPLCSFVFAGLSFAVILPAQA. Positions 202–223 are cleaved as a propeptide — spacer peptide; the sequence is AQQAQALQLAAARNQRFALERG. Catalysis depends on serine 224, which acts as the Nucleophile. Residues 731-746 show a composition bias toward polar residues; that stretch reads ESSNPQSAHSSDQTEA. Residues 731-750 form a disordered region; sequence ESSNPQSAHSSDQTEAFSKK.

The protein belongs to the peptidase S45 family. Heterodimer of an alpha subunit and a beta subunit processed from the same precursor.

Its subcellular location is the periplasm. The enzyme catalyses an N-acyl-L-homoserine lactone + H2O = L-homoserine lactone + a carboxylate. Functionally, catalyzes the deacylation of acyl-homoserine lactone (AHL or acyl-HSL), releasing homoserine lactone (HSL) and the corresponding fatty acid. Possesses a specificity for the degradation of long-chain acyl-HSLs (side chains of 11 to 14 carbons in length). This is Acyl-homoserine lactone acylase PvdQ (pvdQ) from Pseudomonas syringae pv. syringae (strain B728a).